Reading from the N-terminus, the 45-residue chain is Protein PsbN (45 aa).

The chain crosses the membrane as a helical span at residues 12-30; that stretch reads FLSRSLVSFTGYALYTAFG.

It belongs to the PsbN family.

Its subcellular location is the plastid. It is found in the chloroplast thylakoid membrane. Functionally, may play a role in photosystem I and II biogenesis. In Adiantum capillus-veneris (Maidenhair fern), this protein is Protein PsbN.